The chain runs to 548 residues: Kinetochore and Eb1-associated basic protein (548 aa).

2 disordered regions span residues 1-51 and 82-181; these read MSSM…PKHP and YRSS…IRPK. 3 stretches are compositionally biased toward basic and acidic residues: residues 20 to 29, 104 to 116, and 127 to 141; these read RTKELLERQR, RTWE…EFRS, and PRPR…DLRS. An important for kinetochore and microtubule localization region spans residues 100–253; the sequence is QNRQRTWEGP…TTSKRKLDFK (154 aa). Residues 144–155 are compositionally biased toward polar residues; sequence QGTPATKIPSQR. Positions 149-152 match the SXIP motif 1 motif; it reads TKIP. The segment covering 156–165 has biased composition (basic and acidic residues); the sequence is NPKENQELSK. Positions 166 to 175 are enriched in polar residues; the sequence is SHTCIPSSEP. The SXIP motif 2 signature appears at 168–171; sequence TCIP. A CH (calponin-homology)-like region, which is not required for kinetochore and microtubule localization region spans residues 237–372; that stretch reads SDKGIKLTTS…MCALPVVSEK (136 aa). Positions 386–457 form a coiled coil; that stretch reads YDVMSLQQKF…LQLQRLRLQE (72 aa).

Interacts with Eb1 via the two SxIP motifs; the interaction is not required for kebab kinetochore localization.

The protein resides in the cytoplasm. The protein localises to the perinuclear region. It is found in the chromosome. Its subcellular location is the centromere. It localises to the kinetochore. The protein resides in the cytoskeleton. The protein localises to the spindle. In Drosophila melanogaster (Fruit fly), this protein is Kinetochore and Eb1-associated basic protein.